The chain runs to 2254 residues: Voltage-dependent T-type calcium channel subunit alpha-1G (2254 aa).

The tract at residues 1–48 (MDEEEDGAGAEESGQPRSFTQLNDLSGAGGRQGPGSTEKDPGSADSEA) is disordered. At 1-80 (MDEEEDGAGA…RSWCLRTVCN (80 aa)) the chain is on the cytoplasmic side. Over residues 15–24 (QPRSFTQLND) the composition is skewed to polar residues. The stretch at 68–398 (SRPRSWCLRT…LCLVVIATQF (331 aa)) is one I repeat. Residues 81-101 (PWFERVSMLVILLNCVTLGMF) form a helical membrane-spanning segment. The Extracellular segment spans residues 102-119 (RPCEDIACDSQRCRILQA). The helical transmembrane segment at 120-141 (FDDFIFAFFAVEMVVKMVALGI) threads the bilayer. The Cytoplasmic segment spans residues 142-150 (FGKKCYLGD). A helical membrane pass occupies residues 151–170 (TWNRLDFFIVIAGMLEYSLD). Residues 171–175 (LQNVS) are Extracellular-facing. An N-linked (GlcNAc...) asparagine glycan is attached at asparagine 173. The helical transmembrane segment at 176–193 (FSAVRTVRVLRPLRAINR) threads the bilayer. At 194–213 (VPSMRILVTLLLDTLPMLGN) the chain is on the cytoplasmic side. Residues 214 to 234 (VLLLCFFVFFIFGIVGVQLWA) form a helical membrane-spanning segment. The Extracellular segment spans residues 235–370 (GLLRNRCFLP…YFVMDAHSFY (136 aa)). Asparagine 246, asparagine 306, asparagine 310, and asparagine 322 each carry an N-linked (GlcNAc...) asparagine glycan. A helical membrane pass occupies residues 371 to 395 (NFIYFILLIIVGSFFMINLCLVVIA). Over 396–744 (TQFSETKQRE…DTFRKIVDSK (349 aa)) the chain is Cytoplasmic. Serine 467 carries the post-translational modification Phosphoserine. Residues 494–506 (LVHHHHHHHHHYH) show a composition bias toward basic residues. 4 disordered regions span residues 494–513 (LVHH…GTLR), 525–553 (DANG…AESV), 579–598 (ASGR…TSPP), and 699–721 (DAQH…GPDA). Pro residues predominate over residues 534–545 (LPPPSTPTPSGG). Serine 716 is subject to Phosphoserine. One copy of the II repeat lies at 730 to 968 (WRLICDTFRK…LLVAILVEGF (239 aa)). The helical transmembrane segment at 745–765 (YFGRGIMIAILVNTLSMGIEY) threads the bilayer. The Extracellular segment spans residues 766 to 778 (HEQPEELTNALEI). The helical transmembrane segment at 779 to 800 (SNIVFTSLFALEMLLKLLVYGP) threads the bilayer. Over 801–806 (FGYIKN) the chain is Cytoplasmic. A helical transmembrane segment spans residues 807 to 825 (PYNIFDGVIVVISVWEIVG). Residues 826–833 (QQGGGLSV) are Extracellular-facing. Residues 834–857 (LRTFRLMRVLKLVRFLPALQRQLV) traverse the membrane as a helical segment. At 858-868 (VLMKTMDNVAT) the chain is on the cytoplasmic side. The helical transmembrane segment at 869–889 (FCMLLMLFIFIFSILGMHLFG) threads the bilayer. Topologically, residues 890–940 (CKFASERDGDTLPDRKNFDSLLWAIVTVFQILTQEDWNKVLYNGMASTSSW) are extracellular. Residues 941–965 (AALYFIALMTFGNYVLFNLLVAILV) form a helical membrane-spanning segment. Topologically, residues 966–1251 (EGFQAEGDAT…SRFRLLCHRI (286 aa)) are cytoplasmic. Residues 1024–1209 (TPMSHPKSSS…GDDDNDEGNL (186 aa)) form a disordered region. Low complexity-rich tracts occupy residues 1041–1052 (GSGSRRTSSSGS) and 1065–1091 (PPSA…SRNS). Composition is skewed to acidic residues over residues 1117 to 1126 (ESQDEEESSE) and 1196 to 1206 (PQLDGDDDNDE). Phosphoserine occurs at positions 1118, 1124, and 1125. The stretch at 1242–1519 (SRFRLLCHRI…MFVGVVVENF (278 aa)) is one III repeat. A helical transmembrane segment spans residues 1252–1274 (ITHKMFDHVVLVIIFLNCITIAM). Over 1275–1292 (ERPKIDPHSAERIFLTLS) the chain is Extracellular. The helical transmembrane segment at 1293 to 1313 (NYIFTAVFLAEMTVKVVALGW) threads the bilayer. The Cytoplasmic portion of the chain corresponds to 1314–1323 (CFGEQAYLRS). A helical membrane pass occupies residues 1324-1343 (SWNVLDGLLVLISVIDILVS). Topologically, residues 1344 to 1357 (MVSDSGTKILGMLR) are extracellular. A helical transmembrane segment spans residues 1358 to 1379 (VLRLLRTLRPLRVISRAQGLKL). Residues 1380-1389 (VVETLMSSLK) lie on the Cytoplasmic side of the membrane. Residues 1390-1413 (PIGNIVVICCAFFIIFGILGVQLF) form a helical membrane-spanning segment. At 1414-1490 (KGKFFVCQGE…DQQPIMNHNP (77 aa)) the chain is on the extracellular side. N-linked (GlcNAc...) asparagine glycans are attached at residues asparagine 1427 and asparagine 1430. The chain crosses the membrane as a helical span at residues 1491–1516 (WMLLYFISFLLIVAFFVLNMFVGVVV). At 1517 to 1578 (ENFHKCRQHQ…RLLVHHLCTS (62 aa)) the chain is on the cytoplasmic side. The IV repeat unit spans residues 1564 to 1822 (DYSRFRLLVH…VVIAVLMKHL (259 aa)). Residues 1579–1599 (HYLDLFITGVIGLNVVTMAME) traverse the membrane as a helical segment. The Extracellular segment spans residues 1600–1613 (HYQQPQILDEALKI). Residues 1614-1635 (CNYIFTVIFVFESVFKLVAFGF) traverse the membrane as a helical segment. Residues 1636-1642 (RRFFQDR) are Cytoplasmic-facing. The helical transmembrane segment at 1643–1661 (WNQLDLAIVLLSIMGITLE) threads the bilayer. Residues 1662–1675 (EIEVNLSLPINPTI) lie on the Extracellular side of the membrane. Residue asparagine 1666 is glycosylated (N-linked (GlcNAc...) asparagine). A helical transmembrane segment spans residues 1676–1699 (IRIMRVLRIARVLKLLKMAVGMRA). Residues 1700 to 1713 (LLHTVMQALPQVGN) lie on the Cytoplasmic side of the membrane. The chain crosses the membrane as a helical span at residues 1714–1734 (LGLLFMLLFFIFAALGVELFG). Residues 1735–1794 (DLECDETHPCEGLGRHATFRNFGMAFLTLFRVSTGDNWNGIMKDTLRDCDQESTCYNTVI) are Extracellular-facing. A helical transmembrane segment spans residues 1795–1822 (SPIYFVSFVLTAQFVLVNVVIAVLMKHL). Residues 1823-2254 (EESNKEAKEE…LSSDPTDMDP (432 aa)) are Cytoplasmic-facing. Residues 2153–2254 (DSGSQPRLCP…LSSDPTDMDP (102 aa)) are disordered. Over residues 2184-2193 (SPPSISIDPP) the composition is skewed to low complexity. Composition is skewed to polar residues over residues 2220-2232 (PSVS…TAAS) and 2240-2254 (LSLS…DMDP).

Belongs to the calcium channel alpha-1 subunit (TC 1.A.1.11) family. CACNA1G subfamily. Post-translationally, in response to raising of intracellular calcium, the T-type channels are activated by CaM-kinase II. As to expression, highly expressed in brain. Moderate expression in heart; low expression in placenta, kidney and lung.

The protein resides in the cell membrane. It localises to the cytoplasm. The enzyme catalyses Ca(2+)(in) = Ca(2+)(out). Voltage-sensitive calcium channels (VSCC) mediate the entry of calcium ions into excitable cells and are also involved in a variety of calcium-dependent processes, including muscle contraction, hormone or neurotransmitter release, gene expression, cell motility, cell division and cell death. The isoform alpha-1G gives rise to T-type calcium currents. T-type calcium channels belong to the 'low-voltage activated (LVA)' group and are strongly blocked by nickel and mibefradil. A particularity of this type of channels is an opening at quite negative potentials and a voltage-dependent inactivation. T-type channels serve pacemaking functions in both central neurons and cardiac nodal cells and support calcium signaling in secretory cells and vascular smooth muscle. They may also be involved in the modulation of firing patterns of neurons which is important for information processing as well as in cell growth processes. The sequence is that of Voltage-dependent T-type calcium channel subunit alpha-1G (Cacna1g) from Rattus norvegicus (Rat).